The sequence spans 992 residues: GATOR2 complex protein WDR59 (992 aa).

7 WD repeats span residues 57–98 (QSKW…GEVG), 103–143 (GHTR…KPTV), 146–185 (SAVA…TAVE), 189–229 (AHLS…KYLN), 232–276 (PCQV…APVH), 278–318 (FVGH…RVDY), and 319–362 (QMQR…SLSH). Residues 343-373 (PEPEKTPHPQDIDHQPSLSHGEEDAIKEDPP) form a disordered region. Basic and acidic residues predominate over residues 344-373 (EPEKTPHPQDIDHQPSLSHGEEDAIKEDPP). The region spanning 393–494 (QEFSLINVQI…RQLVSCLESF (102 aa)) is the RWD domain. Serine 564 carries the phosphoserine modification. The stretch at 660-706 (KSLGELYILNVNDTQETCQKNATSAMLVGRKDLVQVWSLATVATDLC) is one WD 8 repeat. A phosphoserine mark is found at serine 839, serine 840, and serine 848. The disordered stretch occupies residues 849–870 (LTYSDPRERERDQHDKNKRLLD). Over residues 853 to 869 (DPRERERDQHDKNKRLL) the composition is skewed to basic and acidic residues. The C4-type zinc-finger motif lies at 919–939 (YCSHCRSEVRGTQCAICKGFT). 13 residues coordinate Zn(2+): cysteine 920, cysteine 923, cysteine 932, cysteine 935, cysteine 945, cysteine 956, histidine 961, histidine 964, histidine 967, cysteine 978, cysteine 982, cysteine 984, and cysteine 986. The RING-type; atypical zinc finger occupies 940–989 (FQCAICHVAVRGSSNFCLTCGHGGHTSHMMEWFRTQEVCPTGCGCHCLLE).

Belongs to the WD repeat WDR59 family. As to quaternary structure, component of the GATOR2 subcomplex, composed of MIOS, SEC13, SEH1L, WDR24 and WDR59. The GATOR2 complex interacts with CASTOR1 and CASTOR2; the interaction is negatively regulated by arginine. The GATOR2 complex interacts with SESN1, SESN2 and SESN3; the interaction is negatively regulated by amino acids. Interacts with DDB1-CUL4A/B E3 ligase complexes.

It localises to the lysosome membrane. Its activity is regulated as follows. The GATOR2 complex is negatively regulated by the upstream amino acid sensors CASTOR1 and SESN2, which sequester the GATOR2 complex in absence of amino acids. In the presence of abundant amino acids, GATOR2 is released from CASTOR1 and SESN2 and activated. Its function is as follows. As a component of the GATOR2 complex, functions as an activator of the amino acid-sensing branch of the mTORC1 signaling pathway. The GATOR2 complex indirectly activates mTORC1 through the inhibition of the GATOR1 subcomplex. GATOR2 probably acts as an E3 ubiquitin-protein ligase toward GATOR1. In the presence of abundant amino acids, the GATOR2 complex mediates ubiquitination of the NPRL2 core component of the GATOR1 complex, leading to GATOR1 inactivation. In the absence of amino acids, GATOR2 is inhibited, activating the GATOR1 complex. The sequence is that of GATOR2 complex protein WDR59 from Mus musculus (Mouse).